A 119-amino-acid polypeptide reads, in one-letter code: Microtubule nucleation factor SSNA1 (119 aa).

An N-acetylthreonine modification is found at Thr-2. Residues 2–32 (TQQGAALQNYNNELVKCIEELCQKREELCRQ) form an important for localization to the centrosome region. Positions 13-70 (NELVKCIEELCQKREELCRQIQQEEDEKQRLQNEVRQLTEKLARVNENLARKIASRNE) form a coiled coil.

It belongs to the SSNA1 family. Self-associates to form fibrils. Also forms dimers as well as monomers. Interacts with SPAST.

It localises to the nucleus. It is found in the cytoplasm. The protein localises to the cytoskeleton. The protein resides in the microtubule organizing center. Its subcellular location is the centrosome. It localises to the centriole. It is found in the midbody. The protein localises to the flagellum basal body. The protein resides in the flagellum axoneme. Its subcellular location is the cell projection. It localises to the axon. Functionally, microtubule-binding protein which stabilizes dynamic microtubules by slowing growth and shrinkage at both plus and minus ends and serves as a sensor of microtubule damage, protecting microtubules from the microtubule-severing enzyme SPAST. Induces microtubule branching which is mediated by the formation of long SSNA1 fibrils which guide microtubule protofilaments to split apart from the mother microtubule and form daughter microtubules. Plays a role in axon outgrowth and branching. Required for cell division. The protein is Microtubule nucleation factor SSNA1 of Mus musculus (Mouse).